The following is a 766-amino-acid chain: MGSAQARQRLLAIFGQVQAYIFQVEMLKRCDPSALLPLVGSLKLNALTIRMLRRKLGGALIEQAQHQQTPLACALTMALEYAEVEGERVLRAVDDVNLAGPEGFFRATMRLDEPCEYHVRVHLDTYGGPIDAEVQFLHDAENFLKQLNYCHLITGFEAGLDALESVARFLTRTVGSGIVVPPELCDPTHPCSVCFEELCVTANQGEAVHRRLLECTCDHITRQMAVRVANIDIARHLPHALSVASERRAAAEAALRALEARRVQGHNGKSAGTEDPTQQVASRLLESHHVFKPASRCLYAVSELKFWLASTKHGDMGQPRAIDTFTENLETLDKQEKFFHLQAATVELALFGRTLDHFDRLFADQLLGLDVIDGMLVGSCAVSPDDHIEALIKACYTHHMSAPLLQRLTDPDTSNREALKQLLGRIGVDTDDGAGELGDALDVDLDNLGGAPPVNSTPCGEDALCRTVSEERPWDKLLERATADASQRRRMYAERLSKRSIASLGRCVREQRRELEKTLRVNVYGEVLLHTYVSSYNGFCARRGFCAAVSRAGTIIDNRSSTSAFDSHQFMKAALLRHPIDQSLMPSITHKFFELINGPVFDNAGHNFAQPPNTALYYSVENVGLLPHLKEELARFMITAAKGDWSISEFQRFYCFEGVTGVTATQRLAWKYIGELILAAAVFSSVFHCGEVRLLRADRTYPDSSGAQRCVSGIYITYEASCPLVAVLSAAPHGAIGAETVVIYDSDVFSLLYAVLQQLAPGSGAN.

The C3H1-type zinc-finger motif lies at 191–219; that stretch reads CSVCFEELCVTANQGEAVHRRLLECTCDH. Residue 683–690 coordinates ATP; sequence FSSVFHCG.

Belongs to the herpesviridae TRM1 protein family. In terms of assembly, associates with TRM2 and TRM3 to form the tripartite terminase complex. Interacts with portal protein.

The protein localises to the host nucleus. Component of the molecular motor that translocates viral genomic DNA in empty capsid during DNA packaging. Forms a tripartite terminase complex together with TRM2 and TRM3 in the host cytoplasm. Once the complex reaches the host nucleus, it interacts with the capsid portal vertex. This portal forms a ring in which genomic DNA is translocated into the capsid. TRM1 carries an endonuclease activity that plays an important role for the cleavage of concatemeric viral DNA into unit length genomes. This chain is Tripartite terminase subunit 1, found in Equus caballus (Horse).